Consider the following 710-residue polypeptide: Effector protein AvrPphD (710 aa).

Residues 1 to 15 (MNPLRSIQHNITTPP) show a composition bias toward polar residues. Disordered stretches follow at residues 1–36 (MNPL…HPKR), 136–155 (ISFD…SVLS), and 173–207 (SSSL…DSGS).

It is found in the secreted. Effector protein involved in non-host recognition and able to elicit hypersensitive response (HR). This chain is Effector protein AvrPphD (avrPphD), found in Pseudomonas savastanoi pv. phaseolicola (Pseudomonas syringae pv. phaseolicola).